The primary structure comprises 153 residues: MTDTELRVSKIQKGTVIDHIAGGQALNVLAILGIDGTSGDEISVGMNVPSDRLGRKDIVKVEGRELSQNEVDVLSLIAPAATINIVRDFEVIEKHRVTRPETVEGVLSCPNANCITTENEPVDSRFEVLEAGVRCSYCGTIIRESLAAHISVA.

Zn(2+) is bound by residues C109, C114, C135, and C138.

This sequence belongs to the PyrI family. Contains catalytic and regulatory chains. It depends on Zn(2+) as a cofactor.

Involved in allosteric regulation of aspartate carbamoyltransferase. The protein is Aspartate carbamoyltransferase regulatory chain of Natronomonas pharaonis (strain ATCC 35678 / DSM 2160 / CIP 103997 / JCM 8858 / NBRC 14720 / NCIMB 2260 / Gabara) (Halobacterium pharaonis).